Consider the following 253-residue polypeptide: Succinate dehydrogenase [ubiquinone] iron-sulfur subunit, mitochondrial (253 aa).

Residues 23-114 form the 2Fe-2S ferredoxin-type domain; the sequence is FKIYRWNPDK…TTKIYPLPHM (92 aa). Residues Cys-74, Cys-79, Cys-82, and Cys-94 each contribute to the [2Fe-2S] cluster site. A 4Fe-4S ferredoxin-type domain is found at 156-186; it reads DRKKLDGLYECILCACCSTSCPSYWWNQEEY. Positions 166, 169, and 172 each coordinate [4Fe-4S] cluster. Cys-176 lines the [3Fe-4S] cluster pocket. Trp-181 is a binding site for a ubiquinone. Residues Cys-223 and Cys-229 each contribute to the [3Fe-4S] cluster site. Cys-233 serves as a coordination point for [4Fe-4S] cluster.

This sequence belongs to the succinate dehydrogenase/fumarate reductase iron-sulfur protein family. As to quaternary structure, component of complex II composed of four subunits: a flavoprotein (FP), an iron-sulfur protein (IP), and a cytochrome b composed of a large and a small subunit. It depends on [2Fe-2S] cluster as a cofactor. [3Fe-4S] cluster is required as a cofactor. The cofactor is [4Fe-4S] cluster.

The protein localises to the mitochondrion inner membrane. The catalysed reaction is a quinone + succinate = fumarate + a quinol. It participates in carbohydrate metabolism; tricarboxylic acid cycle; fumarate from succinate (eukaryal route): step 1/1. In terms of biological role, iron-sulfur protein (IP) subunit of succinate dehydrogenase (SDH) that is involved in complex II of the mitochondrial electron transport chain and is responsible for transferring electrons from succinate to ubiquinone (coenzyme Q). This is Succinate dehydrogenase [ubiquinone] iron-sulfur subunit, mitochondrial (SDH2) from Candida glabrata (strain ATCC 2001 / BCRC 20586 / JCM 3761 / NBRC 0622 / NRRL Y-65 / CBS 138) (Yeast).